Here is a 378-residue protein sequence, read N- to C-terminus: tRNA-specific 2-thiouridylase MnmA (378 aa).

Residues A6–S13 and L32 contribute to the ATP site. The active-site Nucleophile is the C101. Residues C101 and C199 are joined by a disulfide bond. ATP is bound at residue G125. Positions K148–Q150 are interaction with tRNA. The active-site Cysteine persulfide intermediate is C199.

This sequence belongs to the MnmA/TRMU family.

It localises to the cytoplasm. The enzyme catalyses S-sulfanyl-L-cysteinyl-[protein] + uridine(34) in tRNA + AH2 + ATP = 2-thiouridine(34) in tRNA + L-cysteinyl-[protein] + A + AMP + diphosphate + H(+). Functionally, catalyzes the 2-thiolation of uridine at the wobble position (U34) of tRNA, leading to the formation of s(2)U34. The polypeptide is tRNA-specific 2-thiouridylase MnmA (Renibacterium salmoninarum (strain ATCC 33209 / DSM 20767 / JCM 11484 / NBRC 15589 / NCIMB 2235)).